Reading from the N-terminus, the 207-residue chain is Large ribosomal subunit protein uL3 (207 aa).

The protein belongs to the universal ribosomal protein uL3 family. As to quaternary structure, part of the 50S ribosomal subunit. Forms a cluster with proteins L14 and L19.

In terms of biological role, one of the primary rRNA binding proteins, it binds directly near the 3'-end of the 23S rRNA, where it nucleates assembly of the 50S subunit. The polypeptide is Large ribosomal subunit protein uL3 (Fervidobacterium nodosum (strain ATCC 35602 / DSM 5306 / Rt17-B1)).